A 100-amino-acid polypeptide reads, in one-letter code: uncharacterized protein (100 aa).

This is an uncharacterized protein from Schizosaccharomyces pombe (strain 972 / ATCC 24843) (Fission yeast).